We begin with the raw amino-acid sequence, 2045 residues long: Non-reducing polyketide synthase pks27 (2045 aa).

Residues 10-247 (IVFGDLTCDS…LTIPIYAPYH (238 aa)) are N-terminal acylcarrier protein transacylase domain (SAT). The region spanning 380-813 (HSKLAIIGYS…GGNSSVLIED (434 aa)) is the Ketosynthase family 3 (KS3) domain. Residues cysteine 552, histidine 687, and histidine 731 each act as for beta-ketoacyl synthase activity in the active site. The interval 913–1213 (FAFTGQGSQY…VPTLQRNKDT (301 aa)) is malonyl-CoA:ACP transacylase (MAT) domain. The interval 1289 to 1422 (HKLVEEKKDG…ASITFPDAKA (134 aa)) is N-terminal hotdog fold. One can recognise a PKS/mFAS DH domain in the interval 1289-1599 (HKLVEEKKDG…AQGVPRRLMD (311 aa)). Histidine 1321 acts as the Proton acceptor; for dehydratase activity in catalysis. The interval 1442–1599 (AARLNTDDRV…AQGVPRRLMD (158 aa)) is C-terminal hotdog fold. The Proton donor; for dehydratase activity role is filled by aspartate 1511. Positions 1612–1636 (APAGGTLNASQSAAANPAADPSAQA) are disordered. Residues 1619-1636 (NASQSAAANPAADPSAQA) show a composition bias toward low complexity. The 78-residue stretch at 1635–1712 (QADSDNWQAA…ELEAFWKQGA (78 aa)) folds into the Carrier domain. The interval 1640-1709 (NWQAALKIIS…TIKELEAFWK (70 aa)) is product template (PT) domain. O-(pantetheine 4'-phosphoryl)serine is present on serine 1672. The tract at residues 1735-1776 (EAEVDQDKNSSDEDRSSLGTSSYEVISPNTTETTPEITKTSS) is disordered. The segment covering 1739–1750 (DQDKNSSDEDRS) has biased composition (basic and acidic residues). Residues 1760–1776 (ISPNTTETTPEITKTSS) are compositionally biased toward low complexity. The thioesterase stretch occupies residues 1798 to 2039 (TLFLLPDGSG…AKRLSEMIEG (242 aa)).

Requires pantetheine 4'-phosphate as cofactor.

It functions in the pathway secondary metabolite biosynthesis. In terms of biological role, non-reducing polyketide synthase (NRPKS); part of the gene cluster 27 that mediates the biosynthesis of asparasone A, a sclerotium-specific anthraquinone pigment important for sclerotial survival. Catalyzes the formation of the aromatic polyketide from acetyl coenzyme A and seven malonyl coenzyme A molecules. Through its product template (PT) domain, catalyzes the cyclization of polyketide backbone via C6-C11 aldolcondensation. This chain is Non-reducing polyketide synthase pks27, found in Aspergillus flavus (strain ATCC 200026 / FGSC A1120 / IAM 13836 / NRRL 3357 / JCM 12722 / SRRC 167).